The chain runs to 135 residues: Cystatin-1 (135 aa).

The N-terminal stretch at 1–24 (MRKHRIVSLVAALLVLLALAAVSS) is a signal peptide. Residues 86–90 (QVVAG) carry the Secondary area of contact motif.

Belongs to the cystatin family. Phytocystatin subfamily.

In Zea mays (Maize), this protein is Cystatin-1 (RAMDAZC7).